The following is a 410-amino-acid chain: Centromere protein U (410 aa).

The segment at 1–72 is disordered; sequence MAARRSLRYS…YETFDPPLHS (72 aa). Positions 4–21 match the Nuclear localization signal motif; that stretch reads RRSLRYSGDPGAKRSRNT. The segment covering 28-38 has biased composition (basic residues); sequence RKQKAGQKPKR. A Phosphothreonine; by PLK1 modification is found at T73. A disordered region spans residues 87–228; it reads SSTSPATHRG…THSDASESMH (142 aa). Polar residues predominate over residues 101–115; sequence NLNPSENEASGNDSI. S105, S110, S114, S130, S133, and S135 each carry phosphoserine. Residues 138–149 show a composition bias toward basic and acidic residues; the sequence is DNVRRSVSIERP. Over residues 158 to 169 the composition is skewed to low complexity; it reads PAAASSSSSPSE. Residue K179 forms a Glycyl lysine isopeptide (Lys-Gly) (interchain with G-Cter in SUMO2) linkage. Phosphoserine is present on S186. Residue T191 is modified to Phosphothreonine. Basic residues predominate over residues 200–218; the sequence is TQKKVRPSPGRRKRPRRGS. A Phosphoserine modification is found at S224. Residues 289–352 adopt a coiled-coil conformation; it reads QMLKALKRKN…LKNSKHFLSN (64 aa). The short motif at 295–312 is the Nuclear localization signal element; that stretch reads KRKNTKIISNMEKKRQRL.

Belongs to the CENP-U/AME1 family. In terms of assembly, component of the CENPA-NAC complex, at least composed of CENPA, CENPC, CENPH, CENPM, CENPN, CENPT and CENPU. The CENPA-NAC complex interacts with the CENPA-CAD complex, composed of CENPI, CENPK, CENPL, CENPO, CENPP, CENPQ, CENPR and CENPS. Interacts with MLF1. Phosphorylated by PLK1 at Thr-73, creating a self-tethering site that specifically interacts with the polo-box domain of PLK1. As to expression, expressed at high levels in glioblastoma cell lines. Up-regulated in GBM (glioblastoma multiforme) tumors. Significantly increased in both the tumor core as well as the contralateral striatum and cortex in gliomas.

It is found in the cytoplasm. The protein resides in the nucleus. Its subcellular location is the chromosome. The protein localises to the centromere. It localises to the kinetochore. In terms of biological role, component of the CENPA-NAC (nucleosome-associated) complex, a complex that plays a central role in assembly of kinetochore proteins, mitotic progression and chromosome segregation. The CENPA-NAC complex recruits the CENPA-CAD (nucleosome distal) complex and may be involved in incorporation of newly synthesized CENPA into centromeres. Plays an important role in the correct PLK1 localization to the mitotic kinetochores. A scaffold protein responsible for the initial recruitment and maintenance of the kinetochore PLK1 population until its degradation. Involved in transcriptional repression. The polypeptide is Centromere protein U (Cenpu) (Rattus norvegicus (Rat)).